The primary structure comprises 252 residues: 2-succinyl-6-hydroxy-2,4-cyclohexadiene-1-carboxylate synthase (252 aa).

The protein belongs to the AB hydrolase superfamily. MenH family. Monomer.

It catalyses the reaction 5-enolpyruvoyl-6-hydroxy-2-succinyl-cyclohex-3-ene-1-carboxylate = (1R,6R)-6-hydroxy-2-succinyl-cyclohexa-2,4-diene-1-carboxylate + pyruvate. It functions in the pathway quinol/quinone metabolism; 1,4-dihydroxy-2-naphthoate biosynthesis; 1,4-dihydroxy-2-naphthoate from chorismate: step 3/7. It participates in quinol/quinone metabolism; menaquinone biosynthesis. In terms of biological role, catalyzes a proton abstraction reaction that results in 2,5-elimination of pyruvate from 2-succinyl-5-enolpyruvyl-6-hydroxy-3-cyclohexene-1-carboxylate (SEPHCHC) and the formation of 2-succinyl-6-hydroxy-2,4-cyclohexadiene-1-carboxylate (SHCHC). This Salmonella agona (strain SL483) protein is 2-succinyl-6-hydroxy-2,4-cyclohexadiene-1-carboxylate synthase.